The sequence spans 826 residues: 1,4-alpha-glucan-branching enzyme 1, chloroplastic/amyloplastic (826 aa).

The N-terminal 58 residues, 1–58, are a transit peptide targeting the chloroplast; the sequence is ATTTTTTHNSKNKQYLAKQKPVELTLGYQNPNGCKVCSFGSKGSIYQKVSSGFKGVSV. Catalysis depends on aspartate 409, which acts as the Nucleophile. Glutamate 464 (proton donor) is an active-site residue. The interval 782 to 813 is disordered; it reads DTDVARIPDVSMESEDSNLDRIEDNSEDAVDA.

It belongs to the glycosyl hydrolase 13 family. GlgB subfamily. Monomer. In terms of tissue distribution, expressed in roots, leaves, stipules, pods and flowers.

It is found in the plastid. The protein resides in the chloroplast. Its subcellular location is the amyloplast. It carries out the reaction Transfers a segment of a (1-&gt;4)-alpha-D-glucan chain to a primary hydroxy group in a similar glucan chain.. The protein operates within glycan biosynthesis; starch biosynthesis. In terms of biological role, catalyzes the formation of the alpha-1,6-glucosidic linkages in starch by scission of a 1,4-alpha-linked oligosaccharide from growing alpha-1,4-glucan chains and the subsequent attachment of the oligosaccharide to the alpha-1,6 position. May preferentially transfer long chains during branching. The protein is 1,4-alpha-glucan-branching enzyme 1, chloroplastic/amyloplastic (SBEII) of Pisum sativum (Garden pea).